Reading from the N-terminus, the 145-residue chain is Superoxide dismutase [Mn/Fe] (145 aa).

The Fe(3+) site is built by His10 and His64. His10 and His64 together coordinate Mn(2+). A disordered region spans residues 126-145; it reads TSTANQDTPISEGKKPILGL.

Belongs to the iron/manganese superoxide dismutase family. Mn(2+) is required as a cofactor. Requires Fe(3+) as cofactor.

The catalysed reaction is 2 superoxide + 2 H(+) = H2O2 + O2. Its function is as follows. Destroys superoxide anion radicals which are normally produced within the cells and which are toxic to biological systems. Catalyzes the dismutation of superoxide anion radicals into O2 and H2O2 by successive reduction and oxidation of the transition metal ion at the active site. The polypeptide is Superoxide dismutase [Mn/Fe] (sodA) (Streptococcus oralis).